A 737-amino-acid polypeptide reads, in one-letter code: Transcriptional repressor CTCF (737 aa).

At Met1 the chain carries N-acetylmethionine. Residue Lys18 forms a Glycyl lysine isopeptide (Lys-Gly) (interchain with G-Cter in SUMO2) linkage. A Glycyl lysine isopeptide (Lys-Gly) (interchain with G-Cter in SUMO) cross-link involves residue Lys74. Residues 180 to 211 are disordered; it reads QGELPPQEDPSWQKDPDYQPPAKKTKKTKKSK. Basic residues predominate over residues 202 to 211; the sequence is KKTKKTKKSK. Lys219 participates in a covalent cross-link: Glycyl lysine isopeptide (Lys-Gly) (interchain with G-Cter in SUMO2). The C2H2-type 1 zinc-finger motif lies at 266–288; the sequence is FQCELCSYTCPRRSNLDRHMKSH. Thr289 is modified (phosphothreonine). The segment at 294 to 316 adopts a C2H2-type 2 zinc-finger fold; the sequence is HKCHLCGRAFRTVTLLRNHLNTH. At Thr317 the chain carries Phosphothreonine. 2 C2H2-type zinc fingers span residues 322–345 and 351–373; these read HKCP…RYKH and FKCS…IRSH. A Phosphothreonine modification is found at Thr374. The C2H2-type 5 zinc finger occupies 379–401; that stretch reads FQCSLCSYASRDTYKLKRHMRTH. Ser402 carries the post-translational modification Phosphoserine. 5 consecutive C2H2-type zinc fingers follow at residues 407–430, 437–460, 467–489, 495–517, and 523–546; these read YECY…LQKH, FHCP…RKQH, KKCR…QKSH, FKCD…KRTH, and YACS…KRYH. The segment at 555 to 577 adopts a C2H2-type 11; atypical zinc-finger fold; that stretch reads FVCSKCGKTFTRRNTMARHADNC. Disordered stretches follow at residues 573-687 and 699-727; these read HADN…EDQN and KKEP…GDLT. Positions 593-604 are enriched in basic residues; that stretch reads KSKRGRKRKMRS. Phosphoserine is present on residues Ser609, Ser610, and Ser612. The span at 610 to 636 shows a compositional bias: acidic residues; the sequence is SDSENAEPDLDDNEEEEEPAVEIEPEP. The segment covering 637–657 has biased composition (pro residues); that stretch reads EPQPQPQPQPQPQPVAPAPPP. Positions 668–687 are enriched in polar residues; that stretch reads RTNQPKQNQPTAIIQVEDQN. Residue Lys699 forms a Glycyl lysine isopeptide (Lys-Gly) (interchain with G-Cter in SUMO); alternate linkage. Lys699 participates in a covalent cross-link: Glycyl lysine isopeptide (Lys-Gly) (interchain with G-Cter in SUMO2); alternate. A compositionally biased stretch (acidic residues) spans 704 to 714; that stretch reads AEPAEGEEEEA.

The protein belongs to the CTCF zinc-finger protein family. Interacts with CHD8. Interacts with LLPH. Interacts with CENPE. Interacts with BRD2; promoting BRD2 recruitment to chromatin. In terms of processing, sumoylated on Lys-74 and Lys-699; sumoylation of CTCF contributes to the repressive function of CTCF on the MYC P2 promoter.

Its subcellular location is the nucleus. The protein resides in the nucleoplasm. The protein localises to the chromosome. It is found in the centromere. In terms of biological role, chromatin binding factor that binds to DNA sequence specific sites and regulates the 3D structure of chromatin. Binds together strands of DNA, thus forming chromatin loops, and anchors DNA to cellular structures, such as the nuclear lamina. Defines the boundaries between active and heterochromatic DNA via binding to chromatin insulators, thereby preventing interaction between promoter and nearby enhancers and silencers. Plays a critical role in the epigenetic regulation. Participates in the allele-specific gene expression at the imprinted IGF2/H19 gene locus. On the maternal allele, binding within the H19 imprinting control region (ICR) mediates maternally inherited higher-order chromatin conformation to restrict enhancer access to IGF2. Mediates interchromosomal association between IGF2/H19 and WSB1/NF1 and may direct distant DNA segments to a common transcription factory. Regulates asynchronous replication of IGF2/H19. Plays a critical role in gene silencing over considerable distances in the genome. Preferentially interacts with unmethylated DNA, preventing spreading of CpG methylation and maintaining methylation-free zones. Inversely, binding to target sites is prevented by CpG methylation. Plays an important role in chromatin remodeling. Can dimerize when it is bound to different DNA sequences, mediating long-range chromatin looping. Causes local loss of histone acetylation and gain of histone methylation in the beta-globin locus, without affecting transcription. When bound to chromatin, it provides an anchor point for nucleosomes positioning. Seems to be essential for homologous X-chromosome pairing. May participate with Tsix in establishing a regulatable epigenetic switch for X chromosome inactivation. May play a role in preventing the propagation of stable methylation at the escape genes from X-inactivation. Involved in sister chromatid cohesion. Associates with both centromeres and chromosomal arms during metaphase and required for cohesin localization to CTCF sites. Plays a role in the recruitment of CENPE to the pericentromeric/centromeric regions of the chromosome during mitosis. Acts as a transcriptional repressor binding to promoters of vertebrate MYC gene and BAG1 gene. Also binds to the PLK and PIM1 promoters. Acts as a transcriptional activator of APP. Regulates APOA1/C3/A4/A5 gene cluster and controls MHC class II gene expression. Plays an essential role in oocyte and preimplantation embryo development by activating or repressing transcription. Seems to act as tumor suppressor. The sequence is that of Transcriptional repressor CTCF (Ctcf) from Rattus norvegicus (Rat).